We begin with the raw amino-acid sequence, 234 residues long: Phosphoribosylaminoimidazole-succinocarboxamide synthase (234 aa).

It belongs to the SAICAR synthetase family.

The enzyme catalyses 5-amino-1-(5-phospho-D-ribosyl)imidazole-4-carboxylate + L-aspartate + ATP = (2S)-2-[5-amino-1-(5-phospho-beta-D-ribosyl)imidazole-4-carboxamido]succinate + ADP + phosphate + 2 H(+). It participates in purine metabolism; IMP biosynthesis via de novo pathway; 5-amino-1-(5-phospho-D-ribosyl)imidazole-4-carboxamide from 5-amino-1-(5-phospho-D-ribosyl)imidazole-4-carboxylate: step 1/2. This Streptococcus agalactiae serotype V (strain ATCC BAA-611 / 2603 V/R) protein is Phosphoribosylaminoimidazole-succinocarboxamide synthase.